The primary structure comprises 294 residues: Acetyl-coenzyme A carboxylase carboxyl transferase subunit beta (294 aa).

The CoA carboxyltransferase N-terminal domain maps to 30–294; the sequence is IMTKCPECKK…PEVGGEADGE (265 aa). Residues Cys-34, Cys-37, Cys-53, and Cys-56 each coordinate Zn(2+). The segment at 34–56 adopts a C4-type zinc-finger fold; the sequence is CPECKKIMYTKELQKNLMVCNYC.

Belongs to the AccD/PCCB family. Acetyl-CoA carboxylase is a heterohexamer composed of biotin carboxyl carrier protein (AccB), biotin carboxylase (AccC) and two subunits each of ACCase subunit alpha (AccA) and ACCase subunit beta (AccD). It depends on Zn(2+) as a cofactor.

The protein localises to the cytoplasm. It catalyses the reaction N(6)-carboxybiotinyl-L-lysyl-[protein] + acetyl-CoA = N(6)-biotinyl-L-lysyl-[protein] + malonyl-CoA. It participates in lipid metabolism; malonyl-CoA biosynthesis; malonyl-CoA from acetyl-CoA: step 1/1. Component of the acetyl coenzyme A carboxylase (ACC) complex. Biotin carboxylase (BC) catalyzes the carboxylation of biotin on its carrier protein (BCCP) and then the CO(2) group is transferred by the transcarboxylase to acetyl-CoA to form malonyl-CoA. In Listeria monocytogenes serotype 4b (strain F2365), this protein is Acetyl-coenzyme A carboxylase carboxyl transferase subunit beta.